The sequence spans 434 residues: Serine--tRNA ligase (434 aa).

L-serine is bound at residue 239–241 (TAE). 270–272 (RSE) contributes to the ATP binding site. L-serine is bound at residue E293. 357 to 360 (EISS) contacts ATP. An L-serine-binding site is contributed by S392.

It belongs to the class-II aminoacyl-tRNA synthetase family. Type-1 seryl-tRNA synthetase subfamily. In terms of assembly, homodimer. The tRNA molecule binds across the dimer.

The protein localises to the cytoplasm. It catalyses the reaction tRNA(Ser) + L-serine + ATP = L-seryl-tRNA(Ser) + AMP + diphosphate + H(+). It carries out the reaction tRNA(Sec) + L-serine + ATP = L-seryl-tRNA(Sec) + AMP + diphosphate + H(+). It participates in aminoacyl-tRNA biosynthesis; selenocysteinyl-tRNA(Sec) biosynthesis; L-seryl-tRNA(Sec) from L-serine and tRNA(Sec): step 1/1. Its function is as follows. Catalyzes the attachment of serine to tRNA(Ser). Is also able to aminoacylate tRNA(Sec) with serine, to form the misacylated tRNA L-seryl-tRNA(Sec), which will be further converted into selenocysteinyl-tRNA(Sec). This Cupriavidus taiwanensis (strain DSM 17343 / BCRC 17206 / CCUG 44338 / CIP 107171 / LMG 19424 / R1) (Ralstonia taiwanensis (strain LMG 19424)) protein is Serine--tRNA ligase.